A 31-amino-acid chain; its full sequence is Photosystem II reaction center protein T (31 aa).

Methionine 1 bears the N-formylmethionine mark. The helical transmembrane segment at 3 to 23 threads the bilayer; it reads SVAYILVLTMALAVLFFAIAF.

It belongs to the PsbT family. PSII is composed of 1 copy each of membrane proteins PsbA, PsbB, PsbC, PsbD, PsbE, PsbF, PsbH, PsbI, PsbJ, PsbK, PsbL, PsbM, PsbT, PsbX, PsbY, PsbZ, Psb30/Ycf12, peripheral proteins PsbO, CyanoQ (PsbQ), PsbU, PsbV and a large number of cofactors. It forms dimeric complexes.

It is found in the cellular thylakoid membrane. Found at the monomer-monomer interface of the photosystem II (PS II) dimer, plays a role in assembly and dimerization of PSII. PSII is a light-driven water plastoquinone oxidoreductase, using light energy to abstract electrons from H(2)O, generating a proton gradient subsequently used for ATP formation. This Synechocystis sp. (strain ATCC 27184 / PCC 6803 / Kazusa) protein is Photosystem II reaction center protein T.